Reading from the N-terminus, the 558-residue chain is Zinc finger protein piragua (558 aa).

In terms of domain architecture, ZAD spans 15–94; sequence STCRLCHHNT…QEREQSLQEQ (80 aa). Zn(2+)-binding residues include Cys-17, Cys-20, Cys-67, and Cys-70. The span at 132-177 shows a compositional bias: acidic residues; it reads LAESSEEEFALGSDGEYENYDDDDEEEEEDYDEEDEEDGQNGEDVD. Residues 132 to 178 form a disordered region; the sequence is LAESSEEEFALGSDGEYENYDDDDEEEEEDYDEEDEEDGQNGEDVDM. 9 C2H2-type zinc fingers span residues 208 to 231, 237 to 260, 266 to 288, 294 to 316, 322 to 344, 350 to 372, 414 to 436, 441 to 464, and 468 to 490; these read FLCQ…LAAH, YCCN…KTLH, YVCA…TIVH, FTCN…MRIH, FVCQ…TRSH, FQCG…QQVH, YHCD…QALH, FACK…LEAH, and FTCG…LKVH.

Its function is as follows. May be involved in transcriptional regulation. The function of this protein is unclear. According to one report, it is required for development and viability since mutants display defects in several developmental morphogenetic processes including dorsal closure and head involution, and die by the first instar larval stage. It may also be involved in fwe-mediated cellular competition. However, according to another report, it is not required for development or viability since mutants have no visible phenotype and are fertile. The sequence is that of Zinc finger protein piragua from Drosophila melanogaster (Fruit fly).